The primary structure comprises 331 residues: Tyrosine recombinase XerD (331 aa).

In terms of domain architecture, Core-binding (CB) spans 8 to 93 (GRDGARLESF…SMRQFYRFLY (86 aa)). A Tyr recombinase domain is found at 114 to 318 (ALPKTMSVAD…LEERLQELVQ (205 aa)). Catalysis depends on residues Arg-161 and Lys-185. Basic and acidic residues predominate over residues 214-228 (QEKSKAAASQKKTDT). A disordered region spans residues 214–239 (QEKSKAAASQKKTDTAESPWLFPSNS). Active-site residues include His-270, Arg-273, and His-296. Residue Tyr-305 is the O-(3'-phospho-DNA)-tyrosine intermediate of the active site.

Belongs to the 'phage' integrase family. XerD subfamily. In terms of assembly, forms a cyclic heterotetrameric complex composed of two molecules of XerC and two molecules of XerD.

The protein localises to the cytoplasm. In terms of biological role, site-specific tyrosine recombinase, which acts by catalyzing the cutting and rejoining of the recombining DNA molecules. The XerC-XerD complex is essential to convert dimers of the bacterial chromosome into monomers to permit their segregation at cell division. It also contributes to the segregational stability of plasmids. The protein is Tyrosine recombinase XerD of Agrobacterium fabrum (strain C58 / ATCC 33970) (Agrobacterium tumefaciens (strain C58)).